The primary structure comprises 281 residues: Aquaporin-9 (281 aa).

The Cytoplasmic segment spans residues 1 to 17 (MGAFVNTKVYIENKNIR). A helical membrane pass occupies residues 18-36 (DWLSEALSMFMYMSLLLGS). Residues 37-50 (AATGHFSGREDDAL) are Extracellular-facing. A helical membrane pass occupies residues 51–69 (FGVIFQGFSITFGIYIGGA). Residues 70–71 (MS) lie on the Cytoplasmic side of the membrane. The segment at residues 72 to 84 (GAIINPALTLAVA) is an intramembrane region (discontinuously helical). Positions 76-78 (NPA) match the NPA 1 motif. At 85–90 (LLGKIS) the chain is on the cytoplasmic side. Residues 91 to 115 (WRKCIVLQSAQYIGSFIASAVVYLI) form a helical membrane-spanning segment. The Extracellular portion of the chain corresponds to 116–157 (YNDSLDAFGAGANFTATEPGVFRKDVAGIWSTFPKTYLKERG). N-linked (GlcNAc...) asparagine glycans are attached at residues Asn-117 and Asn-128. Residues 158 to 175 (AIFNQIFCSMLLTFGFLA) traverse the membrane as a helical segment. Residues 176 to 187 (ISDYKNFRPSKG) lie on the Cytoplasmic side of the membrane. A helical membrane pass occupies residues 188–204 (LFPIAVGLLVMTVFLAF). The Extracellular segment spans residues 205–207 (SYS). The discontinuously helical intramembrane region spans 208 to 222 (TGAAMNPARDFSPRL). Positions 213–215 (NPA) match the NPA 2 motif. The Extracellular segment spans residues 223-241 (WSLIIGYGIEVFSYNQYEW). The helical transmembrane segment at 242–262 (FWIPWLMPYVGAMLGALIYQL) threads the bilayer. The Cytoplasmic portion of the chain corresponds to 263-281 (LIGAQWSKGQKGESKHKDP).

Belongs to the MIP/aquaporin (TC 1.A.8) family.

It localises to the cell membrane. It carries out the reaction H2O(in) = H2O(out). In terms of biological role, aquaglyceroporin that may modulate the water content and osmolytes during anhydrobiosis. This Milnesium tardigradum (Water bear) protein is Aquaporin-9.